A 615-amino-acid chain; its full sequence is Aspartokinase (615 aa).

Disordered stretches follow at residues 84–105 (ALQPAMSSSGDGRSGSMSGTAT) and 127–171 (SSVS…SISQ). Low complexity-rich tracts occupy residues 90–102 (SSSGDGRSGSMSG) and 127–164 (SSVSSLSQLESQLGRSGSPSPFQSSSSRSPPRSPATPS). In terms of domain architecture, ACT spans 467 to 537 (IHSNRKTLSH…EVTVSKDMAI (71 aa)).

The protein belongs to the aspartokinase family.

The enzyme catalyses L-aspartate + ATP = 4-phospho-L-aspartate + ADP. The protein operates within amino-acid biosynthesis; L-methionine biosynthesis via de novo pathway; L-homoserine from L-aspartate: step 1/3. It participates in amino-acid biosynthesis; L-threonine biosynthesis; L-threonine from L-aspartate: step 1/5. Phosphorylates aspartate, the first step in the biosynthesis of amino acids that derive from aspartate (the aspartate family of amino acids), including methioinine and threonine, the latter of which is a precursor to isoleucine. The polypeptide is Aspartokinase (Cryptococcus neoformans var. grubii serotype A (strain H99 / ATCC 208821 / CBS 10515 / FGSC 9487) (Filobasidiella neoformans var. grubii)).